The sequence spans 122 residues: Large ribosomal subunit protein bL12 (122 aa).

It belongs to the bacterial ribosomal protein bL12 family. Homodimer. Part of the ribosomal stalk of the 50S ribosomal subunit. Forms a multimeric L10(L12)X complex, where L10 forms an elongated spine to which 2 to 4 L12 dimers bind in a sequential fashion. Binds GTP-bound translation factors.

Forms part of the ribosomal stalk which helps the ribosome interact with GTP-bound translation factors. Is thus essential for accurate translation. This chain is Large ribosomal subunit protein bL12, found in Vibrio vulnificus (strain CMCP6).